The sequence spans 367 residues: Peptide chain release factor 2 (367 aa).

Residue glutamine 249 is modified to N5-methylglutamine.

The protein belongs to the prokaryotic/mitochondrial release factor family. Post-translationally, methylated by PrmC. Methylation increases the termination efficiency of RF2.

The protein localises to the cytoplasm. Functionally, peptide chain release factor 2 directs the termination of translation in response to the peptide chain termination codons UGA and UAA. In Thermotoga sp. (strain RQ2), this protein is Peptide chain release factor 2.